A 131-amino-acid chain; its full sequence is MSWQAYVDEHLMCEIEGHHLTSAAIVGHDGAAWAQSTAFPEFKTEDMANIMKDFDEPGHLAPTGLFLGPTKYMVIQGEPGAVIRGKKGSGGITVKKTGQALVVGIYDEPMTPGQCNMVVERLGDYLLKQGL.

The cysteines at positions 13 and 115 are disulfide-linked. The Involved in PIP2 interaction motif lies at 81–97; the sequence is AVIRGKKGSGGITVKKT. The residue at position 111 (T111) is a Phosphothreonine.

It belongs to the profilin family. As to quaternary structure, occurs in many kinds of cells as a complex with monomeric actin in a 1:1 ratio. In terms of processing, phosphorylated by MAP kinases.

Its subcellular location is the cytoplasm. The protein localises to the cytoskeleton. In terms of biological role, binds to actin and affects the structure of the cytoskeleton. At high concentrations, profilin prevents the polymerization of actin, whereas it enhances it at low concentrations. The sequence is that of Profilin-8 from Zea mays (Maize).